Consider the following 638-residue polypeptide: MGKIIGIDLGTTNSCVAVLDGDSVRVIENAEGDRTTPSIIGYTAEGETLVGQPAKRQSVTNPENTLYAIKRLIGRRFEDKETQRDIDIMPFGIVKADNGDAWVQVKGEKIAPPQVSAEVLKKMKKTAEDFLGETVTEAVITVPAYFNDSQRQATKDAGRIAGLEVKRIINEPTAAALAYGMDKQEGDKVVAVYDLGGGTFDISIIEIDEMDGEHTFEVLATNGDTHLGGEDFDNRLINYLVAEFKKDQGMDLTSDPLAMQRLKEAAEKAKCELSSAQQTDVNLPYITADGSGPKHMNIKVTRAKLESLVEDMVKATLEPLKQALKDADLSVSKIDDVILVGGQSRMPLVQKTVTDFFGKEPRKDVNPDEAVASGAAIQAGVLSGDVTDVLLLDVTPLSLGIETMGGVMTKVIDKNTTIPTKQSQTFSTADDNQAAVTVHVCQGERKQASANKSLGQFNLEGIEPAQRGTPQIEVTFDIDADGILHVTAKDKNTGKEQKITIKASSGLSDEEVEQMVRDAEANADADAKFEELVTARNQADGMIHATRKQVEEAGEELPSEDKEKIEAALTELEEAVKGDDKEVIEAKTQALMEASAKLMEIAQAKEQAQSAPEGAQEADAAPADDVVDAEFEEVKDDK.

At threonine 199 the chain carries Phosphothreonine; by autocatalysis. Residues 604 to 626 are disordered; sequence AKEQAQSAPEGAQEADAAPADDV. A compositionally biased stretch (low complexity) spans 613 to 624; that stretch reads EGAQEADAAPAD.

The protein belongs to the heat shock protein 70 family.

Acts as a chaperone. This is Chaperone protein DnaK 2 from Colwellia psychrerythraea (strain 34H / ATCC BAA-681) (Vibrio psychroerythus).